A 470-amino-acid polypeptide reads, in one-letter code: Histone deacetylase HOS1 (470 aa).

The histone deacetylase stretch occupies residues 47 to 392 (LTFPYARKDD…YTYLTWCVTK (346 aa)). Residue S110 is modified to Phosphoserine. H211 is a catalytic residue.

Belongs to the histone deacetylase family. HD type 1 subfamily.

Its subcellular location is the nucleus. The catalysed reaction is N(6)-acetyl-L-lysyl-[histone] + H2O = L-lysyl-[histone] + acetate. Functionally, responsible for the deacetylation of lysine residues on the N-terminal part of the core histones (H2A, H2B, H3 and H4). Histone deacetylation plays an important role in transcriptional regulation, cell cycle progression and developmental events. Histone deacetylases act via the formation of large multiprotein complexes. The sequence is that of Histone deacetylase HOS1 (HOS1) from Saccharomyces cerevisiae (strain ATCC 204508 / S288c) (Baker's yeast).